The chain runs to 1233 residues: Structural maintenance of chromosomes protein 1A (1233 aa).

Position 32–39 (32–39) interacts with ATP; that stretch reads GPNGSGKS. Coiled coils occupy residues 104-124 and 163-503; these read EYKINNKVVQLHEYSEELEKL and ELAQ…KAEI. Basic and acidic residues predominate over residues 284–293; the sequence is IKEKDSELNQ. Disordered regions lie at residues 284–308 and 348–369; these read IKEKDSELNQKRPQYIKAKENTSHK and QEFEERMEEESQSQGRDLTLEE. 2 positions are modified to phosphoserine: S358 and S360. One can recognise an SMC hinge domain in the interval 515 to 629; that stretch reads VYGRLIDLCQ…DNVEDARRIA (115 aa). K648 and K713 each carry N6-acetyllysine. A coiled-coil region spans residues 660–935; sequence KAKARRWDEK…RHNLLQACKM (276 aa). Residues 947 to 968 are disordered; the sequence is MDDISQEEGSSQGEDSVSGSQR. Residues 953 to 967 show a composition bias toward low complexity; sequence EEGSSQGEDSVSGSQ. A phosphoserine mark is found at S957, S962, S966, and S970. A coiled-coil region spans residues 991–1068; sequence KDAQAEEEIK…FEQIKKERFD (78 aa). K1037 is modified (N6-acetyllysine).

The protein belongs to the SMC family. SMC1 subfamily. As to quaternary structure, forms a heterodimer with SMC3 in cohesin complexes. Cohesin complexes are composed of the SMC1 (SMC1A or meiosis-specific SMC1B) and SMC3 heterodimer attached via their SMC hinge domain, RAD21 which link them, and one STAG protein (STAG1, STAG2 or meiosis-specific STAG3), which interacts with RAD21. In germ cell cohesin complexes, SMC1A is mutually exclusive with SMC1B. Found in a complex with CDCA5, SMC3 and RAD21, PDS5A/SCC-112 and PDS5B/APRIN. Interacts with NDC80, SYCP2, STAG3, BRCA1 and BRAT1. The cohesin complex interacts with the cohesin loading complex subunits NIPBL/Scc2 (via HEAT repeats) and MAU2/Scc4. NIPBL directly contacts all members of the complex, RAD21, SMC1A/B, SMC3 and STAG1. Interacts with RPGR. Found in a complex containing POLE and SMC3. In terms of processing, phosphorylated upon ionizing radiation or DNA methylation. Phosphorylation of Ser-957 and Ser-966 activates it and is required for S-phase checkpoint activation. Ubiquitinated by the DCX(DCAF15) complex, leading to its degradation.

It is found in the nucleus. It localises to the chromosome. Its subcellular location is the centromere. Involved in chromosome cohesion during cell cycle and in DNA repair. Involved in DNA repair via its interaction with BRCA1 and its related phosphorylation by ATM, and works as a downstream effector in the ATM/NBS1 branch of S-phase checkpoint. Central component of cohesin complex. The cohesin complex is required for the cohesion of sister chromatids after DNA replication. The cohesin complex apparently forms a large proteinaceous ring within which sister chromatids can be trapped. At anaphase, the complex is cleaved and dissociates from chromatin, allowing sister chromatids to segregate. The cohesin complex may also play a role in spindle pole assembly during mitosis. Involved in DNA repair via its interaction with BRCA1 and its related phosphorylation by ATM, or via its phosphorylation by ATR. Works as a downstream effector both in the ATM/NBS1 branch and in the ATR/MSH2 branch of S-phase checkpoint. This Bos taurus (Bovine) protein is Structural maintenance of chromosomes protein 1A (SMC1A).